A 282-amino-acid polypeptide reads, in one-letter code: Snake venom serine protease BmSP (282 aa).

Positions 1-18 (MVLIGVLASLLILQLSYS) are cleaved as a signal peptide. The propeptide occupies 19-56 (KSLDDGAKESAYDDEIQQSSWGNSTVNTTLTETVVIQL). N-linked (GlcNAc...) asparagine glycosylation is found at N41 and N45. In terms of domain architecture, Peptidase S1 spans 57–280 (IMGGSECYKS…YIDWIKGIIA (224 aa)). Intrachain disulfides connect C63–C195, C82–C98, C174–C241, C206–C220, and C231–C256. H97 functions as the Charge relay system in the catalytic mechanism. A glycan (N-linked (GlcNAc...) asparagine) is linked at N135. The active-site Charge relay system is the D142. 2 N-linked (GlcNAc...) asparagine glycosylation sites follow: N149 and N153. S235 functions as the Charge relay system in the catalytic mechanism.

It belongs to the peptidase S1 family. Snake venom subfamily. Monomer. As to expression, expressed by the venom gland.

Its subcellular location is the secreted. Functionally, snake venom serine protease that may act in the hemostasis system of the prey. This chain is Snake venom serine protease BmSP, found in Bungarus multicinctus (Many-banded krait).